A 1368-amino-acid polypeptide reads, in one-letter code: DNA-directed RNA polymerase subunit beta (1368 aa).

This sequence belongs to the RNA polymerase beta chain family. As to quaternary structure, the RNAP catalytic core consists of 2 alpha, 1 beta, 1 beta' and 1 omega subunit. When a sigma factor is associated with the core the holoenzyme is formed, which can initiate transcription.

It catalyses the reaction RNA(n) + a ribonucleoside 5'-triphosphate = RNA(n+1) + diphosphate. In terms of biological role, DNA-dependent RNA polymerase catalyzes the transcription of DNA into RNA using the four ribonucleoside triphosphates as substrates. This chain is DNA-directed RNA polymerase subunit beta, found in Burkholderia lata (strain ATCC 17760 / DSM 23089 / LMG 22485 / NCIMB 9086 / R18194 / 383).